A 70-amino-acid polypeptide reads, in one-letter code: UPF0352 protein Sfri_2492 (70 aa).

The protein belongs to the UPF0352 family.

In Shewanella frigidimarina (strain NCIMB 400), this protein is UPF0352 protein Sfri_2492.